A 500-amino-acid polypeptide reads, in one-letter code: Intracellular exo-alpha-(1-&gt;5)-L-arabinofuranosidase 1 (500 aa).

Alpha-L-arabinofuranose contacts are provided by Glu-27, Asn-72, and Asn-172. Catalysis depends on Glu-173, which acts as the Proton donor/acceptor. Residues Tyr-244, Glu-292, and Gln-349 each contribute to the alpha-L-arabinofuranose site. Glu-292 acts as the Nucleophile in catalysis.

Belongs to the glycosyl hydrolase 51 family. As to quaternary structure, homohexamer; trimer of dimers.

It is found in the cytoplasm. The enzyme catalyses Hydrolysis of terminal non-reducing alpha-L-arabinofuranoside residues in alpha-L-arabinosides.. It carries out the reaction (20S)-ginsenoside Rc + H2O = L-arabinofuranose + (20S)-ginsenoside Rd. Its pathway is glycan metabolism; L-arabinan degradation. Its activity is regulated as follows. At a concentration of 5 mM, K(+), Cu(2+) and Ni(2+) exhibit inhibitory effects on the activity. Additionally, the chemical reagent SDS also displays a certain degree of inhibition. Enzymatic activity is largely unaffected by product feedback inhibition. Its function is as follows. Involved in the degradation of arabinan and is a key enzyme in the complete degradation of the plant cell wall. Catalyzes the cleavage of terminal alpha-(1-&gt;5)-arabinofuranosyl bonds in different hemicellulosic homopolysaccharides (branched and debranched arabinans). It acts preferentially on arabinotriose, arabinobiose and linear alpha-(1-&gt;5)-L-arabinan, and is much less effective on branched sugar beet arabinan. When expressed in E.coli, the recombinant enyzme can hydrolyze, with relatively low catalytic efficiency, the terminal alpha-L-arabinofuranoside at the C20 position of ginsenoside Rc to produce ginsenoside Rd, a rare ginsenoside that exhibits diverse and powerful pharmacological activities. The polypeptide is Intracellular exo-alpha-(1-&gt;5)-L-arabinofuranosidase 1 (Bacillus subtilis (strain 168)).